The following is a 412-amino-acid chain: Phosphoglycerate kinase (412 aa).

Residues 24–26 (DLN), Arg44, 67–70 (HLGR), Arg126, and Arg170 each bind substrate. Residues Lys220, Gly308, Glu339, and 368 to 371 (GGDS) each bind ATP.

The protein belongs to the phosphoglycerate kinase family. As to quaternary structure, monomer.

It is found in the cytoplasm. It catalyses the reaction (2R)-3-phosphoglycerate + ATP = (2R)-3-phospho-glyceroyl phosphate + ADP. It participates in carbohydrate degradation; glycolysis; pyruvate from D-glyceraldehyde 3-phosphate: step 2/5. This Mycobacteroides abscessus (strain ATCC 19977 / DSM 44196 / CCUG 20993 / CIP 104536 / JCM 13569 / NCTC 13031 / TMC 1543 / L948) (Mycobacterium abscessus) protein is Phosphoglycerate kinase.